The sequence spans 231 residues: Potassium/proton antiporter CemA (231 aa).

4 consecutive transmembrane segments (helical) span residues 7 to 27 (FISL…SLSF), 116 to 136 (IISF…LIFL), 156 to 176 (ILLL…ELMI), and 191 to 211 (IISG…KYWI).

The protein belongs to the CemA family.

The protein localises to the plastid. It localises to the chloroplast inner membrane. The enzyme catalyses K(+)(in) + H(+)(out) = K(+)(out) + H(+)(in). In terms of biological role, contributes to K(+)/H(+) antiport activity by supporting proton efflux to control proton extrusion and homeostasis in chloroplasts in a light-dependent manner to modulate photosynthesis. Prevents excessive induction of non-photochemical quenching (NPQ) under continuous-light conditions. Indirectly promotes efficient inorganic carbon uptake into chloroplasts. This chain is Potassium/proton antiporter CemA, found in Morus indica (Mulberry).